The primary structure comprises 190 residues: Xanthine phosphoribosyltransferase (190 aa).

Leu-20 and Asn-27 together coordinate xanthine. 128–132 serves as a coordination point for 5-phospho-alpha-D-ribose 1-diphosphate; that stretch reads ANGEA. Lys-156 contributes to the xanthine binding site.

It belongs to the purine/pyrimidine phosphoribosyltransferase family. Xpt subfamily. As to quaternary structure, homodimer.

The protein localises to the cytoplasm. The catalysed reaction is XMP + diphosphate = xanthine + 5-phospho-alpha-D-ribose 1-diphosphate. It participates in purine metabolism; XMP biosynthesis via salvage pathway; XMP from xanthine: step 1/1. Converts the preformed base xanthine, a product of nucleic acid breakdown, to xanthosine 5'-monophosphate (XMP), so it can be reused for RNA or DNA synthesis. The polypeptide is Xanthine phosphoribosyltransferase (Clostridium botulinum (strain Eklund 17B / Type B)).